The primary structure comprises 333 residues: 4-hydroxyproline epimerase (333 aa).

Cys90 (proton acceptor) is an active-site residue. Substrate is bound by residues 91-92 and Asp249; that span reads GH. Cys253 functions as the Proton donor in the catalytic mechanism. 254 to 255 is a substrate binding site; the sequence is GT.

It belongs to the proline racemase family. In terms of assembly, homodimer.

It carries out the reaction trans-4-hydroxy-L-proline = cis-4-hydroxy-D-proline. In terms of biological role, allows intracellular utilization of 4-hydroxyproline, one of the major constituents of host collagen, by converting 4-hydroxy-L-proline to 4-hydroxy-D-proline, which can be further metabolized by intracellular 4-hydroxy-D-proline oxidases. Strong B-cell mitogen. Plays an important role in the regulation of intra- and extracellular amino acid pools, allowing the bacterium to profit from host precursors and enzymatic pathways. This Brucella abortus (strain S19) protein is 4-hydroxyproline epimerase.